A 399-amino-acid chain; its full sequence is Imidazolonepropionase (399 aa).

His74 and His76 together coordinate Fe(3+). 2 residues coordinate Zn(2+): His74 and His76. 4-imidazolone-5-propanoate is bound by residues Arg83, Tyr146, and His176. Tyr146 lines the N-formimidoyl-L-glutamate pocket. His238 contacts Fe(3+). His238 contacts Zn(2+). Gln241 provides a ligand contact to 4-imidazolone-5-propanoate. Asp312 lines the Fe(3+) pocket. Asp312 is a binding site for Zn(2+). Asn314 and Gly316 together coordinate N-formimidoyl-L-glutamate. Ser317 is a 4-imidazolone-5-propanoate binding site.

Belongs to the metallo-dependent hydrolases superfamily. HutI family. Requires Zn(2+) as cofactor. Fe(3+) is required as a cofactor.

The protein localises to the cytoplasm. It catalyses the reaction 4-imidazolone-5-propanoate + H2O = N-formimidoyl-L-glutamate. The protein operates within amino-acid degradation; L-histidine degradation into L-glutamate; N-formimidoyl-L-glutamate from L-histidine: step 3/3. Its function is as follows. Catalyzes the hydrolytic cleavage of the carbon-nitrogen bond in imidazolone-5-propanoate to yield N-formimidoyl-L-glutamate. It is the third step in the universal histidine degradation pathway. This Deinococcus deserti (strain DSM 17065 / CIP 109153 / LMG 22923 / VCD115) protein is Imidazolonepropionase.